The chain runs to 474 residues: tRNA-2-methylthio-N(6)-dimethylallyladenosine synthase (474 aa).

In terms of domain architecture, MTTase N-terminal spans 3–120 (QKLHIKTWGC…LPEMINQIRG (118 aa)). 6 residues coordinate [4Fe-4S] cluster: Cys12, Cys49, Cys83, Cys157, Cys161, and Cys164. The 233-residue stretch at 143-375 (RAEGPTAFVS…QERINQQAAQ (233 aa)) folds into the Radical SAM core domain. The TRAM domain occupies 378-441 (RRMLGTEQRV…TNSLRGEVVR (64 aa)).

The protein belongs to the methylthiotransferase family. MiaB subfamily. As to quaternary structure, monomer. It depends on [4Fe-4S] cluster as a cofactor.

It is found in the cytoplasm. The enzyme catalyses N(6)-dimethylallyladenosine(37) in tRNA + (sulfur carrier)-SH + AH2 + 2 S-adenosyl-L-methionine = 2-methylsulfanyl-N(6)-dimethylallyladenosine(37) in tRNA + (sulfur carrier)-H + 5'-deoxyadenosine + L-methionine + A + S-adenosyl-L-homocysteine + 2 H(+). Catalyzes the methylthiolation of N6-(dimethylallyl)adenosine (i(6)A), leading to the formation of 2-methylthio-N6-(dimethylallyl)adenosine (ms(2)i(6)A) at position 37 in tRNAs that read codons beginning with uridine. The polypeptide is tRNA-2-methylthio-N(6)-dimethylallyladenosine synthase (Haemophilus influenzae (strain PittEE)).